We begin with the raw amino-acid sequence, 127 residues long: Translation initiation factor 5A (127 aa).

Residue Lys35 is modified to Hypusine.

The protein belongs to the eIF-5A family.

Its subcellular location is the cytoplasm. In terms of biological role, functions by promoting the formation of the first peptide bond. In Methanothrix thermoacetophila (strain DSM 6194 / JCM 14653 / NBRC 101360 / PT) (Methanosaeta thermophila), this protein is Translation initiation factor 5A (eIF5A).